Consider the following 266-residue polypeptide: Indole-3-glycerol phosphate synthase (266 aa).

This sequence belongs to the TrpC family.

The catalysed reaction is 1-(2-carboxyphenylamino)-1-deoxy-D-ribulose 5-phosphate + H(+) = (1S,2R)-1-C-(indol-3-yl)glycerol 3-phosphate + CO2 + H2O. Its pathway is amino-acid biosynthesis; L-tryptophan biosynthesis; L-tryptophan from chorismate: step 4/5. This is Indole-3-glycerol phosphate synthase from Herminiimonas arsenicoxydans.